The chain runs to 293 residues: Protein boule-like (293 aa).

Polar residues predominate over residues 1–16; sequence METESRAQSTNQTQTD. The tract at residues 1–39 is disordered; the sequence is METESRAQSTNQTQTDSLSPSPNPVSPVPLNNPTSGPRY. Residues serine 19, serine 21, and serine 26 each carry the phosphoserine modification. An RRM domain is found at 45-122; the sequence is NRIFVGGIDF…KKLNIGPAIR (78 aa). The DAZ domain occupies 172–196; that stretch reads PSRSISSSPVMVAQPVYQQPAYHYQ.

It belongs to the RRM DAZ family. Interacts with DAZ1 and DAZL. As to expression, testis specific. Not expressed in early embryos, primoridal germ cells and spermatogonial cells. First expressed in the cytoplasm of spermatocytes and then persists through meiosis.

The protein localises to the cytoplasm. Probable RNA-binding protein, which may be required during spermatogenesis. May act by binding to the 3'-UTR of mRNAs and regulating their translation. The polypeptide is Protein boule-like (Mus musculus (Mouse)).